We begin with the raw amino-acid sequence, 327 residues long: Protein hunchback (327 aa).

3 consecutive C2H2-type zinc fingers follow at residues 1 to 5, 11 to 33, and 39 to 63; these read HMRNH, FQCS…LKSH, and YRCA…KYQH. Disordered stretches follow at residues 91–121, 143–170, and 182–290; these read KQKP…HPIF, PPNN…MSPP, and ERPL…EVAS. 2 stretches are compositionally biased toward basic and acidic residues: residues 205-216 and 265-276; these read THREMPTEHGDD and LQHEDEKMRDAD. 2 consecutive C2H2-type zinc fingers follow at residues 297–319 and 325–327; these read YTCQ…MGFH and FMC.

It belongs to the hunchback C2H2-type zinc-finger protein family.

The protein localises to the nucleus. Gap class segmentation protein that controls development of head structures. The protein is Protein hunchback (hb) of Manduca sexta (Tobacco hawkmoth).